The chain runs to 280 residues: Ribosomal RNA small subunit methyltransferase A (280 aa).

S-adenosyl-L-methionine-binding residues include Asn-28, Leu-30, Gly-55, Glu-77, Asp-103, and Asn-122.

This sequence belongs to the class I-like SAM-binding methyltransferase superfamily. rRNA adenine N(6)-methyltransferase family. RsmA subfamily.

The protein localises to the cytoplasm. It carries out the reaction adenosine(1518)/adenosine(1519) in 16S rRNA + 4 S-adenosyl-L-methionine = N(6)-dimethyladenosine(1518)/N(6)-dimethyladenosine(1519) in 16S rRNA + 4 S-adenosyl-L-homocysteine + 4 H(+). Functionally, specifically dimethylates two adjacent adenosines (A1518 and A1519) in the loop of a conserved hairpin near the 3'-end of 16S rRNA in the 30S particle. May play a critical role in biogenesis of 30S subunits. The sequence is that of Ribosomal RNA small subunit methyltransferase A from Roseobacter denitrificans (strain ATCC 33942 / OCh 114) (Erythrobacter sp. (strain OCh 114)).